A 408-amino-acid polypeptide reads, in one-letter code: Imidazolonepropionase (408 aa).

Fe(3+) is bound by residues His73 and His75. The Zn(2+) site is built by His73 and His75. 4-imidazolone-5-propanoate-binding residues include Arg82, Tyr145, and His178. Tyr145 lines the N-formimidoyl-L-glutamate pocket. Position 243 (His243) interacts with Fe(3+). His243 lines the Zn(2+) pocket. Gln246 serves as a coordination point for 4-imidazolone-5-propanoate. Residue Asp318 participates in Fe(3+) binding. Asp318 provides a ligand contact to Zn(2+). N-formimidoyl-L-glutamate is bound by residues Asn320 and Gly322. Ser323 contacts 4-imidazolone-5-propanoate.

It belongs to the metallo-dependent hydrolases superfamily. HutI family. Zn(2+) is required as a cofactor. Fe(3+) serves as cofactor.

It localises to the cytoplasm. It catalyses the reaction 4-imidazolone-5-propanoate + H2O = N-formimidoyl-L-glutamate. The protein operates within amino-acid degradation; L-histidine degradation into L-glutamate; N-formimidoyl-L-glutamate from L-histidine: step 3/3. Catalyzes the hydrolytic cleavage of the carbon-nitrogen bond in imidazolone-5-propanoate to yield N-formimidoyl-L-glutamate. It is the third step in the universal histidine degradation pathway. The chain is Imidazolonepropionase from Shewanella piezotolerans (strain WP3 / JCM 13877).